The primary structure comprises 1187 residues: Serine/threonine-protein kinase SIK3 homolog (1187 aa).

Residues 1–15 are compositionally biased toward low complexity; that stretch reads MAAVSSGAAAAAGIP. Positions 1 to 41 are disordered; sequence MAAVSSGAAAAAGIPNPNPNRERPQQQQQQQPASAALHPVA. The Protein kinase domain maps to 59–310; the sequence is YEMERTIGKG…MEQICKNKWM (252 aa). ATP-binding positions include 65–73 and lysine 88; that span reads IGKGNFAVV. Aspartate 181 serves as the catalytic Proton acceptor. Threonine 214 carries the post-translational modification Phosphothreonine. Residue serine 218 is modified to Phosphoserine. Residues 337 to 377 form the UBA domain; it reads LINEQVLMAMAEMGFDRERTLQSLHADSYDHYSATYSLLSD. Disordered regions lie at residues 548–587, 697–776, and 1060–1092; these read LKRP…VQRS, IQPS…PPGS, and CADA…GALQ. Residues 570–581 show a composition bias toward acidic residues; sequence VDEEGSDAEPDP. Positions 739–749 are enriched in polar residues; that stretch reads VQYQHGSALYQ.

Belongs to the protein kinase superfamily. CAMK Ser/Thr protein kinase family. SNF1 subfamily. It depends on Mg(2+) as a cofactor.

The catalysed reaction is L-seryl-[protein] + ATP = O-phospho-L-seryl-[protein] + ADP + H(+). It carries out the reaction L-threonyl-[protein] + ATP = O-phospho-L-threonyl-[protein] + ADP + H(+). The polypeptide is Serine/threonine-protein kinase SIK3 homolog (Danio rerio (Zebrafish)).